The primary structure comprises 360 residues: Glutamate 5-kinase (360 aa).

Lysine 7 is an ATP binding site. Residues serine 47, aspartate 134, and asparagine 146 each contribute to the substrate site. ATP-binding positions include 166–167 (TD) and 210–216 (TGGISTK). Residues 275-356 (VGKITLDDGA…SSIIVVHRDV (82 aa)) enclose the PUA domain.

This sequence belongs to the glutamate 5-kinase family.

The protein resides in the cytoplasm. The catalysed reaction is L-glutamate + ATP = L-glutamyl 5-phosphate + ADP. It functions in the pathway amino-acid biosynthesis; L-proline biosynthesis; L-glutamate 5-semialdehyde from L-glutamate: step 1/2. In terms of biological role, catalyzes the transfer of a phosphate group to glutamate to form L-glutamate 5-phosphate. The protein is Glutamate 5-kinase of Prochlorococcus marinus (strain AS9601).